Consider the following 1437-residue polypeptide: uncharacterized protein (1437 aa).

An N-terminal signal peptide occupies residues 1–25 (MRRGCRHHLAAVVLLIATFPPLAYN). The Extracellular segment spans residues 26 to 1326 (QNIGGINQNI…SRIKENYFKW (1301 aa)). Residues Asn103, Asn315, Asn364, Asn492, Asn605, Asn676, and Asn914 are each glycosylated (N-linked (GlcNAc...) asparagine). The 164-residue stretch at 193–356 (AFFGQQASQA…GRYMFRVDDV (164 aa)) folds into the NIDO domain. An AMOP domain is found at 648–829 (VKEKSREMCH…FRCQMFYWRR (182 aa)). A helical transmembrane segment spans residues 1327–1347 (LAVIAGIVGIIIVILLIFLVF). At 1348 to 1437 (WCIKRKKLQE…QGMLGLNTSV (90 aa)) the chain is on the cytoplasmic side. The disordered stretch occupies residues 1394–1419 (PRTVAMPPPRGTTATPMTLEPRGFSP).

It is found in the membrane. This is an uncharacterized protein from Caenorhabditis elegans.